The chain runs to 363 residues: MNKRKILVPLGDKSYEVTLEAGILNNISEELLKIGITKKRKILVISNEEISNLYGEKFLNNLKDNKFQAKMFLIKAGESYKNLKTLSEIYDVAFEFGLDRNSIIIALGGGIVGDVSGFAAATWLRGIEYIQIPTTLLSMVDSSVGGKTGVNHPKGKNLIGAFNQPKAVFIDPETLKSLPKREFSAGMAEVIKYGVIRDKELFEYLEIEKNKNELINLKNEYLIKIINSSIKTKSNVVSQDEHENGVRAILNYGHSFGHVIENLCGYGKFLHGEAISIGMNIAGKIAIEKGLWSKEELERQRILLESYDLPTEIPKINKEDVLTILMGDKKVRDGKMRFILPKEIGAVDIYDDVEDSLFLKFFS.

NAD(+) contacts are provided by residues 134-135 (TT), Lys147, and Lys156. The Zn(2+) site is built by Glu189, His254, and His271.

This sequence belongs to the sugar phosphate cyclases superfamily. Dehydroquinate synthase family. Requires Co(2+) as cofactor. Zn(2+) is required as a cofactor. NAD(+) serves as cofactor.

It localises to the cytoplasm. The catalysed reaction is 7-phospho-2-dehydro-3-deoxy-D-arabino-heptonate = 3-dehydroquinate + phosphate. It participates in metabolic intermediate biosynthesis; chorismate biosynthesis; chorismate from D-erythrose 4-phosphate and phosphoenolpyruvate: step 2/7. Functionally, catalyzes the conversion of 3-deoxy-D-arabino-heptulosonate 7-phosphate (DAHP) to dehydroquinate (DHQ). The protein is 3-dehydroquinate synthase of Prochlorococcus marinus (strain AS9601).